Here is a 156-residue protein sequence, read N- to C-terminus: Putative pre-16S rRNA nuclease (156 aa).

The protein belongs to the YqgF nuclease family.

The protein resides in the cytoplasm. In terms of biological role, could be a nuclease involved in processing of the 5'-end of pre-16S rRNA. The polypeptide is Putative pre-16S rRNA nuclease (Streptomyces avermitilis (strain ATCC 31267 / DSM 46492 / JCM 5070 / NBRC 14893 / NCIMB 12804 / NRRL 8165 / MA-4680)).